A 68-amino-acid polypeptide reads, in one-letter code: Alpha-conotoxin Lp1.4 (68 aa).

The N-terminal stretch at 1-21 is a signal peptide; sequence MGMRMMSIMFMLVVLATTVVS. Residues 22 to 48 constitute a propeptide that is removed on maturation; it reads FTSDRALDAMNAAASKKASRLIALAVR. Intrachain disulfides connect Cys50–Cys56 and Cys51–Cys64. The tract at residues 52-54 is ser-Xaa-Pro motif, crucial for potent interaction with nAChR; that stretch reads SHP. Asp65 is subject to Aspartic acid 1-amide.

The protein belongs to the conotoxin A superfamily. In terms of tissue distribution, expressed by the venom duct.

It is found in the secreted. Functionally, alpha-conotoxins act on postsynaptic membranes, they bind to the nicotinic acetylcholine receptors (nAChR) and thus inhibit them. This toxin inhibits mouse muscle alpha-1-beta-1-gamma-delta (CHRNA1-CHRNB1-CHRNG-CHRND), and weakly rat neuronal alpha-6/alpha-3-beta-2 (CHRNA6/CHRNA3-CHRNB2). The chain is Alpha-conotoxin Lp1.4 from Conus leopardus (Leopard cone).